The sequence spans 147 residues: Ribonuclease H (147 aa).

An RNase H type-1 domain is found at 3–145; sequence TEDRVEIYTD…ADQLANKGVE (143 aa). 4 residues coordinate Mg(2+): Asp-12, Glu-50, Asp-72, and Asp-137.

This sequence belongs to the RNase H family. Monomer. It depends on Mg(2+) as a cofactor.

It is found in the cytoplasm. The catalysed reaction is Endonucleolytic cleavage to 5'-phosphomonoester.. Functionally, endonuclease that specifically degrades the RNA of RNA-DNA hybrids. The chain is Ribonuclease H from Chromobacterium violaceum (strain ATCC 12472 / DSM 30191 / JCM 1249 / CCUG 213 / NBRC 12614 / NCIMB 9131 / NCTC 9757 / MK).